The following is a 406-amino-acid chain: NADH-ubiquinone oxidoreductase 49 kDa subunit (406 aa).

This sequence belongs to the complex I 49 kDa subunit family. As to quaternary structure, complex I is composed of 45 different subunits. Component of the iron-sulfur (IP) fragment of the enzyme.

The protein localises to the mitochondrion inner membrane. The enzyme catalyses a ubiquinone + NADH + 5 H(+)(in) = a ubiquinol + NAD(+) + 4 H(+)(out). Core subunit of the mitochondrial membrane respiratory chain NADH dehydrogenase (Complex I) that is believed to belong to the minimal assembly required for catalysis. Complex I functions in the transfer of electrons from NADH to the respiratory chain. The immediate electron acceptor for the enzyme is believed to be ubiquinone. This chain is NADH-ubiquinone oxidoreductase 49 kDa subunit (nad7), found in Dictyostelium discoideum (Social amoeba).